Reading from the N-terminus, the 215-residue chain is FBD domain-containing protein At3g58975 (215 aa).

The 78-residue stretch at Arg-122–Leu-199 folds into the FBD domain.

This chain is FBD domain-containing protein At3g58975, found in Arabidopsis thaliana (Mouse-ear cress).